The chain runs to 738 residues: Glycogen [starch] synthase, muscle (738 aa).

Ser-8 bears the Phosphoserine; by AMPK and PKA mark. Phosphoserine is present on Ser-11. Position 39 (Lys-39) interacts with UDP. Residues His-205 and Arg-211 each contribute to the UDP-alpha-D-glucose site. The alpha-D-glucose 6-phosphate site is built by His-291, Glu-292, Gln-294, His-297, and Lys-301. Arg-331 lines the UDP pocket. Residue Arg-331 participates in UDP-alpha-D-glucose binding. The residue at position 412 (Ser-412) is a Phosphoserine. His-501 provides a ligand contact to alpha-D-glucose 6-phosphate. Positions 510, 512, and 513 each coordinate UDP-alpha-D-glucose. A UDP-binding site is contributed by Thr-515. Alpha-D-glucose 6-phosphate-binding residues include Arg-582 and Arg-586. Residues 632–738 are disordered; sequence QGYRYPRPAS…PTSSLGEERN (107 aa). Ser-641 is subject to Phosphoserine; by DYRK2, GSK3-alpha, GSK3-beta and PASK. A phosphoserine mark is found at Ser-645, Ser-649, Ser-652, Ser-653, Ser-657, and Ser-672. Positions 658–681 are enriched in acidic residues; it reads EDEEEPRDGPLGEDSERYDEEEEA. Residues 682–695 show a composition bias toward basic and acidic residues; sequence AKDRRNIRAPEWPR. A phosphoserine mark is found at Ser-698, Ser-709, and Ser-711. Residues 698–738 are compositionally biased toward low complexity; the sequence is SCSSSTGGSKRSNSVDTGPSSSLSTPTEPLSPTSSLGEERN. 2 positions are modified to phosphothreonine: Thr-722 and Thr-724. 2 positions are modified to phosphoserine: Ser-728 and Ser-732.

It belongs to the glycosyltransferase 3 family. As to quaternary structure, part of the GYS1-GYG1 complex, a heterooctamer composed of a tetramer of GYS1 and 2 dimers of GYG1, where each GYS1 protomer binds to one GYG1 subunit (via GYG1 C-terminus); the GYS1 tetramer may dissociate from GYG1 dimers to continue glycogen polymerization on its own. Primed phosphorylation at Ser-657 (site 5) by CSNK2A1 and CSNK2A2 is required for inhibitory phosphorylation at Ser-641 (site 3a), Ser-645 (site 3b), Ser-649 (site 3c) and Ser-653 (site 4) by GSK3A an GSK3B. Phosphorylated at Ser-641 by PASK, leading to inactivation; phosphorylation by PASK is inhibited by glycogen. Phosphorylated at Ser-641 by DYRK2, leading to inactivation. Dephosphorylation at Ser-641 and Ser-645 by PP1 activates the enzyme. Phosphorylation at Ser-8 by AMPK inactivates the enzyme activity.

The enzyme catalyses [(1-&gt;4)-alpha-D-glucosyl](n) + UDP-alpha-D-glucose = [(1-&gt;4)-alpha-D-glucosyl](n+1) + UDP + H(+). It participates in glycan biosynthesis; glycogen biosynthesis. Its activity is regulated as follows. Allosteric activation by glucose-6-phosphate. Phosphorylation reduces the activity towards UDP-glucose. When in the non-phosphorylated state, glycogen synthase does not require glucose-6-phosphate as an allosteric activator; when phosphorylated it does. In terms of biological role, glycogen synthase participates in the glycogen biosynthetic process along with glycogenin and glycogen branching enzyme. Extends the primer composed of a few glucose units formed by glycogenin by adding new glucose units to it. In this context, glycogen synthase transfers the glycosyl residue from UDP-Glc to the non-reducing end of alpha-1,4-glucan. The polypeptide is Glycogen [starch] synthase, muscle (Gys1) (Mus musculus (Mouse)).